We begin with the raw amino-acid sequence, 353 residues long: Thiamine-phosphate synthase (353 aa).

Residues 1–128 (MKSMPFAPIA…AASAAAIRYG (128 aa)) form a unknown region. The interval 129–353 (LYDLEVTVLQ…TSLQLLEALR (225 aa)) is thiamine-phosphate synthase. Residues 185–189 (QYRNK) and Asn-217 each bind 4-amino-2-methyl-5-(diphosphooxymethyl)pyrimidine. Mg(2+) contacts are provided by Asp-218 and Asp-237. Residue Ser-256 coordinates 4-amino-2-methyl-5-(diphosphooxymethyl)pyrimidine. Residue 282–284 (TAT) participates in 2-[(2R,5Z)-2-carboxy-4-methylthiazol-5(2H)-ylidene]ethyl phosphate binding. Lys-285 lines the 4-amino-2-methyl-5-(diphosphooxymethyl)pyrimidine pocket. Residue Gly-312 coordinates 2-[(2R,5Z)-2-carboxy-4-methylthiazol-5(2H)-ylidene]ethyl phosphate.

The protein belongs to the thiamine-phosphate synthase family. The cofactor is Mg(2+).

It carries out the reaction 2-[(2R,5Z)-2-carboxy-4-methylthiazol-5(2H)-ylidene]ethyl phosphate + 4-amino-2-methyl-5-(diphosphooxymethyl)pyrimidine + 2 H(+) = thiamine phosphate + CO2 + diphosphate. It catalyses the reaction 2-(2-carboxy-4-methylthiazol-5-yl)ethyl phosphate + 4-amino-2-methyl-5-(diphosphooxymethyl)pyrimidine + 2 H(+) = thiamine phosphate + CO2 + diphosphate. The enzyme catalyses 4-methyl-5-(2-phosphooxyethyl)-thiazole + 4-amino-2-methyl-5-(diphosphooxymethyl)pyrimidine + H(+) = thiamine phosphate + diphosphate. Its pathway is cofactor biosynthesis; thiamine diphosphate biosynthesis; thiamine phosphate from 4-amino-2-methyl-5-diphosphomethylpyrimidine and 4-methyl-5-(2-phosphoethyl)-thiazole: step 1/1. Condenses 4-methyl-5-(beta-hydroxyethyl)thiazole monophosphate (THZ-P) and 2-methyl-4-amino-5-hydroxymethyl pyrimidine pyrophosphate (HMP-PP) to form thiamine monophosphate (TMP). The protein is Thiamine-phosphate synthase of Prochlorococcus marinus (strain MIT 9313).